Here is a 228-residue protein sequence, read N- to C-terminus: Thiamine-phosphate synthase (228 aa).

4-amino-2-methyl-5-(diphosphooxymethyl)pyrimidine-binding positions include 57 to 61 and asparagine 89; that span reads QLRDK. 2 residues coordinate Mg(2+): aspartate 90 and aspartate 109. Residue serine 128 coordinates 4-amino-2-methyl-5-(diphosphooxymethyl)pyrimidine. Position 154–156 (154–156) interacts with 2-[(2R,5Z)-2-carboxy-4-methylthiazol-5(2H)-ylidene]ethyl phosphate; it reads TPS. Lysine 157 serves as a coordination point for 4-amino-2-methyl-5-(diphosphooxymethyl)pyrimidine. Residues glycine 185 and 205 to 206 each bind 2-[(2R,5Z)-2-carboxy-4-methylthiazol-5(2H)-ylidene]ethyl phosphate; that span reads IS.

The protein belongs to the thiamine-phosphate synthase family. Mg(2+) is required as a cofactor.

The catalysed reaction is 2-[(2R,5Z)-2-carboxy-4-methylthiazol-5(2H)-ylidene]ethyl phosphate + 4-amino-2-methyl-5-(diphosphooxymethyl)pyrimidine + 2 H(+) = thiamine phosphate + CO2 + diphosphate. It carries out the reaction 2-(2-carboxy-4-methylthiazol-5-yl)ethyl phosphate + 4-amino-2-methyl-5-(diphosphooxymethyl)pyrimidine + 2 H(+) = thiamine phosphate + CO2 + diphosphate. The enzyme catalyses 4-methyl-5-(2-phosphooxyethyl)-thiazole + 4-amino-2-methyl-5-(diphosphooxymethyl)pyrimidine + H(+) = thiamine phosphate + diphosphate. The protein operates within cofactor biosynthesis; thiamine diphosphate biosynthesis; thiamine phosphate from 4-amino-2-methyl-5-diphosphomethylpyrimidine and 4-methyl-5-(2-phosphoethyl)-thiazole: step 1/1. Its function is as follows. Condenses 4-methyl-5-(beta-hydroxyethyl)thiazole monophosphate (THZ-P) and 2-methyl-4-amino-5-hydroxymethyl pyrimidine pyrophosphate (HMP-PP) to form thiamine monophosphate (TMP). The protein is Thiamine-phosphate synthase of Roseiflexus castenholzii (strain DSM 13941 / HLO8).